Here is a 400-residue protein sequence, read N- to C-terminus: Argininosuccinate synthase (400 aa).

ATP is bound by residues Ala-10–Ser-18 and Ala-38. Residue Tyr-89 coordinates L-citrulline. Gly-119 contributes to the ATP binding site. The L-aspartate site is built by Thr-121, Asn-125, and Asp-126. Asn-125 contributes to the L-citrulline binding site. Arg-129, Ser-177, Ser-186, Glu-262, and Tyr-274 together coordinate L-citrulline.

It belongs to the argininosuccinate synthase family. Type 1 subfamily. Homotetramer.

It is found in the cytoplasm. It carries out the reaction L-citrulline + L-aspartate + ATP = 2-(N(omega)-L-arginino)succinate + AMP + diphosphate + H(+). The protein operates within amino-acid biosynthesis; L-arginine biosynthesis; L-arginine from L-ornithine and carbamoyl phosphate: step 2/3. This is Argininosuccinate synthase from Trichormus variabilis (strain ATCC 29413 / PCC 7937) (Anabaena variabilis).